Here is a 1057-residue protein sequence, read N- to C-terminus: Diacylglycerol kinase iota (1057 aa).

Low complexity predominate over residues 15–59 (AARGPARAPAAAAAAAASPPGPCSGAACAPSAAAGAGAMNPSSSA). Disordered stretches follow at residues 15–74 (AARG…SSGS) and 334–358 (LKAS…MEQE). The segment covering 337-352 (SNRKKKRTSFKRKASK) has biased composition (basic residues). Positions 372-507 (PLMKPLLVFV…DRWNLHVERN (136 aa)) constitute a DAGKc domain. ANK repeat units lie at residues 950–979 (DHCS…SELL) and 986–1015 (TGET…SLRK). Over residues 1014 to 1024 (RKTDSKGKTPQ) the composition is skewed to basic and acidic residues. Residues 1014 to 1033 (RKTDSKGKTPQERAQQAGDP) form a disordered region. Positions 1055–1057 (TAV) match the PDZ-binding motif.

Belongs to the eukaryotic diacylglycerol kinase family. Interacts (via PDZ-binding motif) with DLG4; controls the localization of DGKI to the synapse. Interacts (via PDZ-binding motif) with DLG1. Interacts (via PDZ-binding motif) with DLG2. Interacts (via PDZ-binding motif) with DLG3. May interact with RASGRP3; involved in the regulation of RASGRP3 activity. As to expression, specifically expressed in brain and retina. In brain, highly expressed in hippocampus, caudate nucleus, occipital pole, cerebral cortex, and cerebellum. Also detected in kidney.

The protein resides in the cell projection. It localises to the axon. The protein localises to the dendrite. Its subcellular location is the presynapse. It is found in the postsynapse. The protein resides in the postsynaptic density. It localises to the synaptic cell membrane. The protein localises to the cytoplasmic vesicle. Its subcellular location is the secretory vesicle. It is found in the synaptic vesicle membrane. The protein resides in the cytoplasm. It localises to the cytosol. The protein localises to the nucleus. It carries out the reaction a 1,2-diacyl-sn-glycerol + ATP = a 1,2-diacyl-sn-glycero-3-phosphate + ADP + H(+). It catalyses the reaction 1,2-di-(9Z-octadecenoyl)-sn-glycerol + ATP = 1,2-di-(9Z-octadecenoyl)-sn-glycero-3-phosphate + ADP + H(+). The catalysed reaction is 1-octadecanoyl-2-(5Z,8Z,11Z,14Z-eicosatetraenoyl)-sn-glycerol + ATP = 1-octadecanoyl-2-(5Z,8Z,11Z,14Z-eicosatetraenoyl)-sn-glycero-3-phosphate + ADP + H(+). The enzyme catalyses 1-octadecanoyl-2-(9Z,12Z)-octadecadienoyl-sn-glycerol + ATP = 1-octadecanoyl-2-(9Z,12Z-octadecadienoyl)-sn-glycero-3-phosphate + ADP + H(+). It participates in lipid metabolism; glycerolipid metabolism. Functionally, diacylglycerol kinase that converts diacylglycerol/DAG into phosphatidic acid/phosphatidate/PA and regulates the respective levels of these two bioactive lipids. Thereby, acts as a central switch between the signaling pathways activated by these second messengers with different cellular targets and opposite effects in numerous biological processes. Has probably no preference for any of the diacylglycerols in terms of the acyl chain composition, especially for the acyl chain at the sn-2 position. By controlling the diacylglycerol/DAG-mediated activation of RASGRP3, negatively regulates the Rap1 signaling pathway. May play a role in presynaptic diacylglycerol/DAG signaling and control neurotransmitter release during metabotropic glutamate receptor-dependent long-term depression. The sequence is that of Diacylglycerol kinase iota from Homo sapiens (Human).